We begin with the raw amino-acid sequence, 549 residues long: Manganese transporter SMF2 (549 aa).

Residues 1 to 23 (MTSQEYEPIQWSDESQTNNDSVN) are disordered. Positions 12–22 (SDESQTNNDSV) are enriched in polar residues. The next 8 membrane-spanning stretches (helical) occupy residues 91–109 (LLFS…QYLC), 130–147 (FGLN…IIAT), 161–185 (ILFH…LLAY), 196–214 (IFEA…CFTV), 312–332 (LLIS…IVSG), 350–372 (IYNL…ALLF), 432–452 (ASQV…LYFT), and 521–541 (VLAI…LLGF).

It belongs to the NRAMP family.

It localises to the vacuole lumen. The protein localises to the vesicle. The protein resides in the cell membrane. The enzyme catalyses Mn(2+)(in) = Mn(2+)(out). Functionally, high-affinity manganese transporter involved in manganese uptake from the extracellular environment. This is Manganese transporter SMF2 (SMF2) from Saccharomyces cerevisiae (strain ATCC 204508 / S288c) (Baker's yeast).